Here is a 212-residue protein sequence, read N- to C-terminus: Protein GrpE (212 aa).

The interval 1–68 (MAETSNNKTS…ELESAKKEIE (68 aa)) is disordered. Positions 9–30 (TSEEAKANEKKSQSETLEESKL) are enriched in basic and acidic residues. The segment covering 40-60 (ETTQTESMETAETETSLQTEL) has biased composition (low complexity).

The protein belongs to the GrpE family. As to quaternary structure, homodimer.

It is found in the cytoplasm. Functionally, participates actively in the response to hyperosmotic and heat shock by preventing the aggregation of stress-denatured proteins, in association with DnaK and GrpE. It is the nucleotide exchange factor for DnaK and may function as a thermosensor. Unfolded proteins bind initially to DnaJ; upon interaction with the DnaJ-bound protein, DnaK hydrolyzes its bound ATP, resulting in the formation of a stable complex. GrpE releases ADP from DnaK; ATP binding to DnaK triggers the release of the substrate protein, thus completing the reaction cycle. Several rounds of ATP-dependent interactions between DnaJ, DnaK and GrpE are required for fully efficient folding. The protein is Protein GrpE of Leptospira interrogans serogroup Icterohaemorrhagiae serovar copenhageni (strain Fiocruz L1-130).